Consider the following 140-residue polypeptide: ATP synthase epsilon chain (140 aa).

Belongs to the ATPase epsilon chain family. F-type ATPases have 2 components, CF(1) - the catalytic core - and CF(0) - the membrane proton channel. CF(1) has five subunits: alpha(3), beta(3), gamma(1), delta(1), epsilon(1). CF(0) has three main subunits: a, b and c.

The protein localises to the cell inner membrane. Functionally, produces ATP from ADP in the presence of a proton gradient across the membrane. This is ATP synthase epsilon chain from Nitrosomonas eutropha (strain DSM 101675 / C91 / Nm57).